A 120-amino-acid chain; its full sequence is UPF0382 membrane protein SSP2132 (120 aa).

Transmembrane regions (helical) follow at residues 3–23, 46–66, 69–89, and 94–114; these read VFIILGALNAMMAVGTGAFGA, MYHGLGLLAIGIISGTTSINV, VGWLLFFGIVFFSGSLYILAL, and IIGAITPIGGVLFIVGWLMLV.

Belongs to the UPF0382 family.

Its subcellular location is the cell membrane. In Staphylococcus saprophyticus subsp. saprophyticus (strain ATCC 15305 / DSM 20229 / NCIMB 8711 / NCTC 7292 / S-41), this protein is UPF0382 membrane protein SSP2132.